The sequence spans 258 residues: Cytochrome b-c1 complex subunit Rieske-1, mitochondrial (258 aa).

Residues 1–46 (WPVRSAAPSSSAFISANHFSSDDDSSSPRSISPSLASVFLHHTRGF) constitute a mitochondrion transit peptide. At 47–95 (SSNSVSPAHDMGLVPDLPPTVAAIKNPTSKIVYDEHNHERYPPGDPSKR) the chain is on the mitochondrial matrix side. Residues 96-118 (AFAYFVLTGGRFVYASLMRLLIL) form a helical membrane-spanning segment. The Mitochondrial intermembrane segment spans residues 119–258 (KFVLSMSASK…FLEENKLLIG (140 aa)). The Rieske domain occupies 161 to 256 (RRRTEDDISL…YSFLEENKLL (96 aa)). 4 residues coordinate [2Fe-2S] cluster: C201, H203, C220, and H223. An intrachain disulfide couples C206 to C222.

The protein belongs to the Rieske iron-sulfur protein family. As to quaternary structure, component of the ubiquinol-cytochrome c oxidoreductase (cytochrome b-c1 complex, complex III, CIII), a multisubunit enzyme composed of 3 respiratory subunits cytochrome b, cytochrome c1 and Rieske protein, 2 core protein subunits, and several low-molecular weight protein subunits. The complex exists as an obligatory dimer and forms supercomplexes (SCs) in the inner mitochondrial membrane with cytochrome c oxidase (complex IV, CIV). The cofactor is [2Fe-2S] cluster.

It localises to the mitochondrion inner membrane. It catalyses the reaction a quinol + 2 Fe(III)-[cytochrome c](out) = a quinone + 2 Fe(II)-[cytochrome c](out) + 2 H(+)(out). In terms of biological role, component of the ubiquinol-cytochrome c oxidoreductase, a multisubunit transmembrane complex that is part of the mitochondrial electron transport chain which drives oxidative phosphorylation. The respiratory chain contains 3 multisubunit complexes succinate dehydrogenase (complex II, CII), ubiquinol-cytochrome c oxidoreductase (cytochrome b-c1 complex, complex III, CIII) and cytochrome c oxidase (complex IV, CIV), that cooperate to transfer electrons derived from NADH and succinate to molecular oxygen, creating an electrochemical gradient over the inner membrane that drives transmembrane transport and the ATP synthase. The cytochrome b-c1 complex catalyzes electron transfer from ubiquinol to cytochrome c, linking this redox reaction to translocation of protons across the mitochondrial inner membrane, with protons being carried across the membrane as hydrogens on the quinol. In the process called Q cycle, 2 protons are consumed from the matrix, 4 protons are released into the intermembrane space and 2 electrons are passed to cytochrome c. The Rieske protein is a catalytic core subunit containing a [2Fe-2S] iron-sulfur cluster. It cycles between 2 conformational states during catalysis to transfer electrons from the quinol bound in the Q(0) site in cytochrome b to cytochrome c1. This Nicotiana tabacum (Common tobacco) protein is Cytochrome b-c1 complex subunit Rieske-1, mitochondrial.